The primary structure comprises 38 residues: Histidine decarboxylase small chain (38 aa).

As to quaternary structure, heterohexamer of 3 large and 3 small chains. Pyruvate is required as a cofactor.

The enzyme catalyses L-histidine + H(+) = histamine + CO2. The chain is Histidine decarboxylase small chain from Micrococcus sp.